We begin with the raw amino-acid sequence, 510 residues long: MPYLLEMKDITKQFGVVKAVDNISLTLEAGQVLSLCGENGSGKSTLMKVLCGIYPVGSYQGEIIFSGETLQAKNIRETEQKGIAIIHQELALVKQMSVLENMFLGSEWGRFGIMDYDAMYLRCQRMLAQVKLVVDPHTPVSELGLGQQQLVEIAKALNKQVRLLVLDEPTASLTESETAILLDIIRDLRNHGIACIYISHKLNEVKEISDHICVIRDGRHIGTRPASTMSEDDIIAMMVGRELKELYPHEAHHIGEEILRVENLCAWHPVNRHIRRVDDVSFSLKRGEILGIAGLVGSGRTETVQCLFGVYPGRWQGDIFIKGQAATIRTCQQAMKLGIAMVPEDRKKDGIVPVMGVGANITLAALDDFTGAFSLLDDAKEQSIIVQSLARLKVKTSSSELAIARLSGGNQQKAILAKCLLLNPQILILDEPTRGIDIGAKYEIYKLINQLVQQGIAVIVISSELPEVLGLSDRVLVMHQGRIKADLINHNLTQEKVMEAALRSETHVTS.

ABC transporter domains are found at residues 5 to 242 (LEMK…VGRE) and 259 to 505 (LRVE…LRSE). Residue 37–44 (GENGSGKS) coordinates ATP.

Belongs to the ABC transporter superfamily. Xylose importer (TC 3.A.1.2.4) family. The complex is composed of two ATP-binding proteins (XylG), two transmembrane proteins (XylH) and a solute-binding protein (XylF).

The protein localises to the cell inner membrane. It carries out the reaction D-xylose(out) + ATP + H2O = D-xylose(in) + ADP + phosphate + H(+). Functionally, part of the ABC transporter complex XylFGH involved in xylose import. Responsible for energy coupling to the transport system. This Yersinia pestis protein is Xylose import ATP-binding protein XylG.